Consider the following 263-residue polypeptide: uncharacterized protein (263 aa).

Glycine 31–threonine 38 serves as a coordination point for ATP.

Belongs to the CbbQ/NirQ/NorQ/GpvN family.

This is an uncharacterized protein from Staphylococcus saprophyticus subsp. saprophyticus (strain ATCC 15305 / DSM 20229 / NCIMB 8711 / NCTC 7292 / S-41).